Reading from the N-terminus, the 187-residue chain is UPF0301 protein PMI0339 (187 aa).

This sequence belongs to the UPF0301 (AlgH) family.

This chain is UPF0301 protein PMI0339, found in Proteus mirabilis (strain HI4320).